A 495-amino-acid chain; its full sequence is Glutelin type-B 2 (495 aa).

Residues 1-24 form the signal peptide; sequence MATTIFSRFSIYFCAMLLCQGSMA. 2 disulfide bridges follow: C45–C78 and C121–C305. 2 consecutive Cupin type-1 domains span residues 50–245 and 311–460; these read LQAF…VAAK and VNIE…EQAR. Positions 464 to 495 are disordered; sequence NNRGEEHGAFTPRFQQQYYPGFSNESESETSE.

Belongs to the 11S seed storage protein (globulins) family. In terms of assembly, hexamer; each subunit is composed of an acidic and a basic chain derived from a single precursor and linked by a disulfide bond.

Its function is as follows. Seed storage protein. This chain is Glutelin type-B 2 (GLUB2), found in Oryza sativa subsp. japonica (Rice).